A 355-amino-acid chain; its full sequence is UDP-3-O-acylglucosamine N-acyltransferase (355 aa).

H258 functions as the Proton acceptor in the catalytic mechanism.

This sequence belongs to the transferase hexapeptide repeat family. LpxD subfamily. As to quaternary structure, homotrimer.

It carries out the reaction a UDP-3-O-[(3R)-3-hydroxyacyl]-alpha-D-glucosamine + a (3R)-hydroxyacyl-[ACP] = a UDP-2-N,3-O-bis[(3R)-3-hydroxyacyl]-alpha-D-glucosamine + holo-[ACP] + H(+). It functions in the pathway bacterial outer membrane biogenesis; LPS lipid A biosynthesis. Catalyzes the N-acylation of UDP-3-O-acylglucosamine using 3-hydroxyacyl-ACP as the acyl donor. Is involved in the biosynthesis of lipid A, a phosphorylated glycolipid that anchors the lipopolysaccharide to the outer membrane of the cell. The polypeptide is UDP-3-O-acylglucosamine N-acyltransferase (Bradyrhizobium diazoefficiens (strain JCM 10833 / BCRC 13528 / IAM 13628 / NBRC 14792 / USDA 110)).